Consider the following 168-residue polypeptide: uncharacterized protein (168 aa).

The tract at residues 18–73 (RTTVKTKSHNPKTLYPNNKPRWESKLHAGPKGFQSSRTSEKPGRPDPDPEDDPPIP) is disordered. Residues 55–64 (TSEKPGRPDP) show a composition bias toward basic and acidic residues. A run of 2 helical transmembrane segments spans residues 84-104 (IVVS…VLEV) and 113-133 (VPLW…ALGI).

It localises to the membrane. This is an uncharacterized protein from Arabidopsis thaliana (Mouse-ear cress).